Here is a 491-residue protein sequence, read N- to C-terminus: Protein nucleotidyltransferase YdiU (491 aa).

ATP-binding residues include Gly94, Gly96, Arg97, Lys117, Asp129, Gly130, Arg180, and Arg187. Asp256 (proton acceptor) is an active-site residue. The Mg(2+) site is built by Asn257 and Asp266. Asp266 is a binding site for ATP.

The protein belongs to the SELO family. The cofactor is Mg(2+). Mn(2+) serves as cofactor.

It catalyses the reaction L-seryl-[protein] + ATP = 3-O-(5'-adenylyl)-L-seryl-[protein] + diphosphate. It carries out the reaction L-threonyl-[protein] + ATP = 3-O-(5'-adenylyl)-L-threonyl-[protein] + diphosphate. The enzyme catalyses L-tyrosyl-[protein] + ATP = O-(5'-adenylyl)-L-tyrosyl-[protein] + diphosphate. The catalysed reaction is L-histidyl-[protein] + UTP = N(tele)-(5'-uridylyl)-L-histidyl-[protein] + diphosphate. It catalyses the reaction L-seryl-[protein] + UTP = O-(5'-uridylyl)-L-seryl-[protein] + diphosphate. It carries out the reaction L-tyrosyl-[protein] + UTP = O-(5'-uridylyl)-L-tyrosyl-[protein] + diphosphate. Nucleotidyltransferase involved in the post-translational modification of proteins. It can catalyze the addition of adenosine monophosphate (AMP) or uridine monophosphate (UMP) to a protein, resulting in modifications known as AMPylation and UMPylation. This is Protein nucleotidyltransferase YdiU from Brevibacillus brevis (strain 47 / JCM 6285 / NBRC 100599).